The following is a 274-amino-acid chain: 3-methyl-2-oxobutanoate hydroxymethyltransferase (274 aa).

Mg(2+) contacts are provided by Asp44 and Asp83. 3-methyl-2-oxobutanoate contacts are provided by residues Asp44–Ser45, Asp83, and Lys113. Glu115 contacts Mg(2+). Glu182 (proton acceptor) is an active-site residue.

Belongs to the PanB family. In terms of assembly, homodecamer; pentamer of dimers. It depends on Mg(2+) as a cofactor.

It localises to the cytoplasm. It carries out the reaction 3-methyl-2-oxobutanoate + (6R)-5,10-methylene-5,6,7,8-tetrahydrofolate + H2O = 2-dehydropantoate + (6S)-5,6,7,8-tetrahydrofolate. It functions in the pathway cofactor biosynthesis; (R)-pantothenate biosynthesis; (R)-pantoate from 3-methyl-2-oxobutanoate: step 1/2. In terms of biological role, catalyzes the reversible reaction in which hydroxymethyl group from 5,10-methylenetetrahydrofolate is transferred onto alpha-ketoisovalerate to form ketopantoate. This Campylobacter jejuni (strain RM1221) protein is 3-methyl-2-oxobutanoate hydroxymethyltransferase.